The following is a 457-amino-acid chain: MALWGGRFTQAADQRFKQFNDSLRFDYRLAEQDIVGSVAWSKALVTVGVLTAEEQAQLEEALNVLLEDVRARPQQILESDAEDIHSWVEGKLIDKVGQLGKKLHTGRSRNDQVATDLKLWCKDTVSELLTANRQLQSALVETAQNNQDAVMPGYTHLQRAQPVTFAHWCLAYVEMLARDESRLQDALKRLDVSPLGCGALAGTAYEIDREQLAGWLGFASATRNSLDSVSDRDHVLELLSAAAIGMVHLSRFAEDLIFFNTGEAGFVELSDRVTSGSSLMPQKKNPDALELIRGKCGRVQGALTGMMMTLKGLPLAYNKDMQEDKEGLFDALDTWLDCLHMAALVLDGIQVKRPRCQEAAQQGYANATELADYLVAKGVPFREAHHIVGEAVVEAIRQGKPLEDLPLDELQKFSPVIDEDVYPILSLQSCLDKRAAKGGVSPQQVAQAIAFAQARLE.

It belongs to the lyase 1 family. Argininosuccinate lyase subfamily.

It localises to the cytoplasm. The catalysed reaction is 2-(N(omega)-L-arginino)succinate = fumarate + L-arginine. Its pathway is amino-acid biosynthesis; L-arginine biosynthesis; L-arginine from L-ornithine and carbamoyl phosphate: step 3/3. The sequence is that of Argininosuccinate lyase from Escherichia coli O139:H28 (strain E24377A / ETEC).